The following is a 79-amino-acid chain: Protein FAM236A (79 aa).

This sequence belongs to the FAM236 family.

The protein is Protein FAM236A of Homo sapiens (Human).